Here is a 280-residue protein sequence, read N- to C-terminus: Four and a half LIM domains protein 1 (280 aa).

Ser-2 carries the post-translational modification N-acetylserine. At Lys-4 the chain carries N6-acetyllysine. A C4-type zinc finger spans residues 7–31; sequence CHYCRDPLQGKKYVQKDGRHCCLKC. LIM zinc-binding domains are found at residues 40–92, 101–153, 162–212, and 221–276; these read CVEC…CNKC, CKGC…CVTC, CVKC…CVDC, and CAGC…CPDC. Lys-86 is covalently cross-linked (Glycyl lysine isopeptide (Lys-Gly) (interchain with G-Cter in SUMO2)).

The protein localises to the cytoplasm. Functionally, may have an involvement in muscle development or hypertrophy. Isoform 2 binds to RBP-J and plays a negative regulatory role in the RBP-J-mediated transcription in mammalian systems. This chain is Four and a half LIM domains protein 1 (Fhl1), found in Rattus norvegicus (Rat).